A 78-amino-acid polypeptide reads, in one-letter code: Small ribosomal subunit protein uS17 (78 aa).

Belongs to the universal ribosomal protein uS17 family. In terms of assembly, part of the 30S ribosomal subunit.

Functionally, one of the primary rRNA binding proteins, it binds specifically to the 5'-end of 16S ribosomal RNA. This chain is Small ribosomal subunit protein uS17, found in Wolbachia pipientis wMel.